The following is a 303-amino-acid chain: Cytosolic Fe-S cluster assembly factor CFD1 (303 aa).

An ATP-binding site is contributed by Gly-15–Ser-22. Cys-199 and Cys-202 together coordinate [4Fe-4S] cluster.

This sequence belongs to the Mrp/NBP35 ATP-binding proteins family. NUBP2/CFD1 subfamily. Heterotetramer of 2 NBP35 and 2 CFD1 chains. [4Fe-4S] cluster serves as cofactor.

It is found in the cytoplasm. Its function is as follows. Component of the cytosolic iron-sulfur (Fe/S) protein assembly (CIA) machinery. Required for maturation of extramitochondrial Fe-S proteins. The NBP35-CFD1 heterotetramer forms a Fe-S scaffold complex, mediating the de novo assembly of an Fe-S cluster and its transfer to target apoproteins. The polypeptide is Cytosolic Fe-S cluster assembly factor CFD1 (Chaetomium globosum (strain ATCC 6205 / CBS 148.51 / DSM 1962 / NBRC 6347 / NRRL 1970) (Soil fungus)).